Consider the following 445-residue polypeptide: Phosphoglucosamine mutase (445 aa).

Residue Ser99 is the Phosphoserine intermediate of the active site. 4 residues coordinate Mg(2+): Ser99, Asp242, Asp244, and Asp246. Phosphoserine is present on Ser99.

It belongs to the phosphohexose mutase family. It depends on Mg(2+) as a cofactor. Post-translationally, activated by phosphorylation.

The enzyme catalyses alpha-D-glucosamine 1-phosphate = D-glucosamine 6-phosphate. In terms of biological role, catalyzes the conversion of glucosamine-6-phosphate to glucosamine-1-phosphate. The sequence is that of Phosphoglucosamine mutase from Helicobacter pylori (strain G27).